A 422-amino-acid chain; its full sequence is Ornithine decarboxylase (422 aa).

Residue lysine 71 is modified to N6-(pyridoxal phosphate)lysine. Pyridoxal 5'-phosphate contacts are provided by residues serine 203, glycine 240, and 275–278 (EPGR). 331–332 (FD) is a substrate binding site. Cysteine 359 functions as the Proton donor; shared with dimeric partner in the catalytic mechanism. Aspartate 360 serves as a coordination point for substrate. Tyrosine 388 is a pyridoxal 5'-phosphate binding site.

Belongs to the Orn/Lys/Arg decarboxylase class-II family. As to quaternary structure, homodimer. Only the dimer is catalytically active, as the active sites are constructed of residues from both monomers. The cofactor is pyridoxal 5'-phosphate.

It catalyses the reaction L-ornithine + H(+) = putrescine + CO2. It functions in the pathway amine and polyamine biosynthesis; putrescine biosynthesis via L-ornithine pathway; putrescine from L-ornithine: step 1/1. Its activity is regulated as follows. Inhibited by antizyme (AZ) in response to polyamine levels. AZ inhibits the assembly of the functional homodimer by binding to ODC monomers and targeting them for ubiquitin-independent proteolytic destruction by the 26S proteasome. Its function is as follows. Catalyzes the first and rate-limiting step of polyamine biosynthesis that converts ornithine into putrescine, which is the precursor for the polyamines, spermidine and spermine. Polyamines are essential for cell proliferation and are implicated in cellular processes, ranging from DNA replication to apoptosis. This Caenorhabditis elegans protein is Ornithine decarboxylase.